We begin with the raw amino-acid sequence, 294 residues long: MYB-like transcription factor ODO1 (294 aa).

2 HTH myb-type domains span residues 9–61 and 62–116; these read KLGV…TNYL and RPDL…KKKL. DNA-binding regions (H-T-H motif) lie at residues 37–61 and 89–112; these read WRAVPKLAGLKRCGKSCRLRWTNYL and WSKIAARLPGRTDNEIKNHWNTHI. 2 disordered regions span residues 128–152 and 171–191; these read PLKKEANLSDQPTTESDQNKENGHQ and TEFDNNSSFSSSASSSENSSC.

As to expression, restricted to the petals, with the highest expression in the limb, probably in both epidermal and mesophyll cell layers.

It localises to the nucleus. Functionally, R2R3 MYB-type transcription factor controlling the production of volatile organic compounds (VOCs), including floral volatile benzenoids and phenylpropanoids (FVBP), in flowers of fragrant cultivars (e.g. cv. Mitchell and cv. V26) by regulating the shikimate pathway, via the activation of several genes (e.g. EPSPS, ADT1, PAL1, CFAT and CCoAOMT1). This scent, mostly produced in the evening and night by the petals, attracts the pollinators (e.g. the night-active hawkmoth pollinator Manduca sexta). Promotes the expression of ABCG1 in petals three hours before the onset of volatile scent emission. Anthocyanins production is not controlled by ODO1 as color and scent are produced at different stages of development. Seems to trigger a negative feed-back loop that represses the expression of EOBI. This Petunia hybrida (Petunia) protein is MYB-like transcription factor ODO1.